Consider the following 233-residue polypeptide: tRNA (guanine-N(1)-)-methyltransferase (233 aa).

S-adenosyl-L-methionine is bound by residues glycine 113 and 133-138 (VGDYVL).

Belongs to the RNA methyltransferase TrmD family. Homodimer.

It is found in the cytoplasm. The enzyme catalyses guanosine(37) in tRNA + S-adenosyl-L-methionine = N(1)-methylguanosine(37) in tRNA + S-adenosyl-L-homocysteine + H(+). In terms of biological role, specifically methylates guanosine-37 in various tRNAs. This is tRNA (guanine-N(1)-)-methyltransferase from Rhizobium etli (strain ATCC 51251 / DSM 11541 / JCM 21823 / NBRC 15573 / CFN 42).